The chain runs to 598 residues: Pentatricopeptide repeat-containing protein At1g09900 (598 aa).

14 PPR repeats span residues 101–135 (EDVE…GNVP), 136–170 (DIIP…GAVP), 171–201 (DVIT…MSVS), 203–237 (DVVT…DCYP), 238–272 (DVIT…GCTP), 273–307 (DVVT…GCQP), 308–342 (NVIT…GFSP), 343–377 (SVVT…GCQP), 378–412 (NSLS…GCYP), 413–447 (DIVT…GCSP), 448–482 (VLIT…DLKP), 483–517 (DTIT…GIRP), 518–552 (NAVT…GCKP), and 553–587 (NETS…GLMK).

It belongs to the PPR family. P subfamily.

The sequence is that of Pentatricopeptide repeat-containing protein At1g09900 from Arabidopsis thaliana (Mouse-ear cress).